The chain runs to 249 residues: 2,3-bisphosphoglycerate-dependent phosphoglycerate mutase (249 aa).

Substrate-binding positions include 11–18 (RHGESEWN), 24–25 (TG), Arg-63, 90–93 (ERHY), Lys-101, and 117–118 (RR). The active-site Tele-phosphohistidine intermediate is His-12. Residue Glu-90 is the Proton donor/acceptor of the active site. Residues 119–138 (SYDTPPPPIERGSTYSQDAD) are disordered. 184-185 (GN) serves as a coordination point for substrate.

The protein belongs to the phosphoglycerate mutase family. BPG-dependent PGAM subfamily.

It catalyses the reaction (2R)-2-phosphoglycerate = (2R)-3-phosphoglycerate. It functions in the pathway carbohydrate degradation; glycolysis; pyruvate from D-glyceraldehyde 3-phosphate: step 3/5. Its function is as follows. Catalyzes the interconversion of 2-phosphoglycerate and 3-phosphoglycerate. The protein is 2,3-bisphosphoglycerate-dependent phosphoglycerate mutase of Mycolicibacterium paratuberculosis (strain ATCC BAA-968 / K-10) (Mycobacterium paratuberculosis).